The chain runs to 123 residues: Large ribosomal subunit protein uL18 (123 aa).

It belongs to the universal ribosomal protein uL18 family. Part of the 50S ribosomal subunit; part of the 5S rRNA/L5/L18/L25 subcomplex. Contacts the 5S and 23S rRNAs.

Functionally, this is one of the proteins that bind and probably mediate the attachment of the 5S RNA into the large ribosomal subunit, where it forms part of the central protuberance. The protein is Large ribosomal subunit protein uL18 of Chlamydia muridarum (strain MoPn / Nigg).